We begin with the raw amino-acid sequence, 638 residues long: MTQLPKTPLLDQVIYPADLRKLEDRDLPQLAREVRDEMIDAVSRTGGHLGAGLGVVELTIAIHSVFDTPDDRLIFDVGHQCYPHKILTGRRDRIRTLRQEDGLSGFTRRAESEYDPFGAAHSSTSISAGLGMAIAADLDKSDRRVIAVIGDGAMSAGMAYEALNNAGALDARLIVILNDNDMSIAPPTGAMSAYLARLASGRTYMGFRDFGKKLTAYLGKNIDRAITRAVEHARGYVTGGTMFEEMGFYHIGPIDGHSFDHLLPVLRNVRDNGRGPVLIHVVTQKGKGYPPAEAAADKYHGVNKFDVITGAQARVKPNAPSYTSVFAEALVQEATLDDKIVGITAAMPNGTGLDKLAEAFPSRCFDVGIAEQHAVTFAAGLAAEGYKPFAALYSTFLQRAYDQVVHDVAIQGLPVRFPIDRAGFVGADGPTHAGSFDTAFLTTLPGFVVMAAADEAELKHMVRTAVAYDGGPISFRYPRGEGVGVDMPARGEILQIGKGRIVKEGTKVALLSFGTRLADCLLAAEDLDAAGLSTTVADARFAKPLDHDLIRQLARHHEMVITVEEGSIGGFGSHVMHFLATEGLLDNGLKLRSLVMPDIWMEQAKPEAMNAHAGLDRAGIVSTVFKALGRGVAVGVAG.

Thiamine diphosphate contacts are provided by residues His-79 and 120–122; that span reads AHS. Mg(2+) is bound at residue Asp-151. Thiamine diphosphate is bound by residues 152–153, Asn-180, Tyr-289, and Glu-371; that span reads GA. Asn-180 is a Mg(2+) binding site.

This sequence belongs to the transketolase family. DXPS subfamily. Homodimer. The cofactor is Mg(2+). It depends on thiamine diphosphate as a cofactor.

The enzyme catalyses D-glyceraldehyde 3-phosphate + pyruvate + H(+) = 1-deoxy-D-xylulose 5-phosphate + CO2. Its pathway is metabolic intermediate biosynthesis; 1-deoxy-D-xylulose 5-phosphate biosynthesis; 1-deoxy-D-xylulose 5-phosphate from D-glyceraldehyde 3-phosphate and pyruvate: step 1/1. Catalyzes the acyloin condensation reaction between C atoms 2 and 3 of pyruvate and glyceraldehyde 3-phosphate to yield 1-deoxy-D-xylulose-5-phosphate (DXP). The polypeptide is 1-deoxy-D-xylulose-5-phosphate synthase (Rhizobium johnstonii (strain DSM 114642 / LMG 32736 / 3841) (Rhizobium leguminosarum bv. viciae)).